The sequence spans 683 residues: Zinc finger protein 510 (683 aa).

In terms of domain architecture, KRAB spans 46–117; that stretch reads VSFKDVTIEF…EEEFSNQSHP (72 aa). The segment at 254-276 adopts a C2H2-type 1; degenerate zinc-finger fold; sequence FECNKIGKAFNDKANCVKHNSSH. C2H2-type zinc fingers lie at residues 404 to 426, 432 to 454, 460 to 482, 488 to 510, 516 to 538, 544 to 566, 572 to 594, 600 to 622, and 628 to 650; these read YKCN…QRTH, FECS…QRIH, YKCN…QRIH, YECS…HRIH, FQCN…QRTH, YQCN…QKTH, and FKCN…QRIH.

The protein belongs to the krueppel C2H2-type zinc-finger protein family.

Its subcellular location is the nucleus. Its function is as follows. May be involved in transcriptional regulation. The polypeptide is Zinc finger protein 510 (ZNF510) (Homo sapiens (Human)).